Consider the following 4485-residue polypeptide: Dynein gamma chain, flagellar outer arm (4485 aa).

A stem region spans residues 1 to 1780; it reads MALDNRHRLI…IISICDVDFE (1780 aa). Coiled coils occupy residues 449-469, 804-838, 1093-1114, 1275-1297, and 1699-1727; these read IEGL…VKRK, VEQN…VRNY, VRNV…DNLI, DVVE…SKKL, and KKVD…NLET. AAA regions lie at residues 1781 to 2002, 2061 to 2279, 2384 to 2638, and 2763 to 3013; these read YSFE…VLRT, KDAE…ISLK, TYPK…VFQG, and KFNE…YRRY. Residues 1819 to 1826, 2099 to 2106, 2425 to 2432, and 2802 to 2809 contribute to the ATP site; these read GPAGTGKT, GPSGSGKS, GGPGTAKT, and GVGGSGKQ. Coiled-coil stretches lie at residues 3077–3099, 3196–3227, 3265–3343, and 3569–3663; these read AKEA…KEKQ, EAQK…ELLE, KVVE…LAGE, and EDQL…EEYR. The tract at residues 3077–3343 is stalk; the sequence is AKEAEALLKQ…NALIGALAGE (267 aa). AAA regions lie at residues 3412 to 3643 and 3857 to 4071; these read LVDD…DVSE and AADY…FLQN.

It belongs to the dynein heavy chain family. As to quaternary structure, consists of at least 3 heavy chains (alpha, beta and gamma), 2 intermediate chains and 8 light chains.

Its subcellular location is the cell projection. It localises to the cilium. It is found in the flagellum. The protein localises to the cytoplasm. The protein resides in the cytoskeleton. Its subcellular location is the flagellum axoneme. Force generating protein of eukaryotic cilia and flagella. Produces force towards the minus ends of microtubules. Dynein has ATPase activity; the force-producing power stroke is thought to occur on release of ADP. This chain is Dynein gamma chain, flagellar outer arm (ODA2), found in Chlamydomonas reinhardtii (Chlamydomonas smithii).